The chain runs to 427 residues: Enolase 2 (427 aa).

A (2R)-2-phosphoglycerate-binding site is contributed by glutamine 165. The active-site Proton donor is the glutamate 207. Residues aspartate 244, glutamate 287, and aspartate 314 each coordinate Mg(2+). Residues lysine 339, arginine 368, serine 369, and lysine 390 each contribute to the (2R)-2-phosphoglycerate site. Lysine 339 serves as the catalytic Proton acceptor.

Belongs to the enolase family. In terms of assembly, component of the RNA degradosome, a multiprotein complex involved in RNA processing and mRNA degradation. The cofactor is Mg(2+).

It is found in the cytoplasm. The protein resides in the secreted. Its subcellular location is the cell surface. The enzyme catalyses (2R)-2-phosphoglycerate = phosphoenolpyruvate + H2O. Its pathway is carbohydrate degradation; glycolysis; pyruvate from D-glyceraldehyde 3-phosphate: step 4/5. Functionally, catalyzes the reversible conversion of 2-phosphoglycerate (2-PG) into phosphoenolpyruvate (PEP). It is essential for the degradation of carbohydrates via glycolysis. The sequence is that of Enolase 2 from Pseudomonas syringae pv. tomato (strain ATCC BAA-871 / DC3000).